We begin with the raw amino-acid sequence, 209 residues long: MRILFIIIQLTLILSACAYQQGKQGQNVEKESTRQQETKPIHVKDTTQETKDNGTRTDIAKHLVSVAEKNPDVKDATAVVLGGYAVVGIDVDDTLDRSKVETIKYSVAQALKNDRYGANAVVIADPDTVSRLREMSREISEGHPVTGILDELAAIVGRVLPEVPNDVIDNEDEPQTKQQNDQLNRKQQQEMEKEQNDQSDHHMKKNNND.

The first 16 residues, 1 to 16 (MRILFIIIQLTLILSA), serve as a signal peptide directing secretion. A lipid anchor (N-palmitoyl cysteine) is attached at cysteine 17. Cysteine 17 is lipidated: S-diacylglycerol cysteine. Disordered regions lie at residues 26 to 54 (QNVE…KDNG) and 165 to 209 (NDVI…NNND). Basic and acidic residues-rich tracts occupy residues 28–54 (VEKE…KDNG) and 183–209 (LNRK…NNND).

It is found in the forespore inner membrane. Functionally, probably contributes, directly or indirectly, to early events in germination. The sequence is that of Probable spore germination lipoprotein YlaJ (ylaJ) from Bacillus subtilis (strain 168).